A 247-amino-acid chain; its full sequence is Phosphoribosylaminoimidazole-succinocarboxamide synthase (247 aa).

This sequence belongs to the SAICAR synthetase family.

It carries out the reaction 5-amino-1-(5-phospho-D-ribosyl)imidazole-4-carboxylate + L-aspartate + ATP = (2S)-2-[5-amino-1-(5-phospho-beta-D-ribosyl)imidazole-4-carboxamido]succinate + ADP + phosphate + 2 H(+). Its pathway is purine metabolism; IMP biosynthesis via de novo pathway; 5-amino-1-(5-phospho-D-ribosyl)imidazole-4-carboxamide from 5-amino-1-(5-phospho-D-ribosyl)imidazole-4-carboxylate: step 1/2. This is Phosphoribosylaminoimidazole-succinocarboxamide synthase from Herpetosiphon aurantiacus (strain ATCC 23779 / DSM 785 / 114-95).